Reading from the N-terminus, the 273-residue chain is 4-hydroxy-tetrahydrodipicolinate reductase (273 aa).

NAD(+)-binding positions include 12 to 17 (GAGGRM) and Glu-38. Arg-39 lines the NADP(+) pocket. NAD(+) is bound by residues 102 to 104 (GTT) and 126 to 129 (AANF). Residue His-159 is the Proton donor/acceptor of the active site. His-160 lines the (S)-2,3,4,5-tetrahydrodipicolinate pocket. Catalysis depends on Lys-163, which acts as the Proton donor. 169 to 170 (GT) serves as a coordination point for (S)-2,3,4,5-tetrahydrodipicolinate.

Belongs to the DapB family. Homotetramer.

Its subcellular location is the cytoplasm. It carries out the reaction (S)-2,3,4,5-tetrahydrodipicolinate + NAD(+) + H2O = (2S,4S)-4-hydroxy-2,3,4,5-tetrahydrodipicolinate + NADH + H(+). The catalysed reaction is (S)-2,3,4,5-tetrahydrodipicolinate + NADP(+) + H2O = (2S,4S)-4-hydroxy-2,3,4,5-tetrahydrodipicolinate + NADPH + H(+). Its pathway is amino-acid biosynthesis; L-lysine biosynthesis via DAP pathway; (S)-tetrahydrodipicolinate from L-aspartate: step 4/4. Its function is as follows. Catalyzes the conversion of 4-hydroxy-tetrahydrodipicolinate (HTPA) to tetrahydrodipicolinate. This Escherichia coli O157:H7 protein is 4-hydroxy-tetrahydrodipicolinate reductase.